The chain runs to 166 residues: Small ribosomal subunit protein uS4 (166 aa).

The S4 RNA-binding domain maps to 102-164; the sequence is RRLQTIVWRK…HPSCLEVEKE (63 aa).

This sequence belongs to the universal ribosomal protein uS4 family. In terms of assembly, part of the 30S ribosomal subunit. Contacts protein S5. The interaction surface between S4 and S5 is involved in control of translational fidelity.

Functionally, one of the primary rRNA binding proteins, it binds directly to 16S rRNA where it nucleates assembly of the body of the 30S subunit. Its function is as follows. With S5 and S12 plays an important role in translational accuracy. In Korarchaeum cryptofilum (strain OPF8), this protein is Small ribosomal subunit protein uS4.